A 708-amino-acid chain; its full sequence is Ion-translocating oxidoreductase complex subunit C (708 aa).

4Fe-4S ferredoxin-type domains follow at residues 369-397 (GEPQ…QQLY) and 407-436 (KATT…VQYF). Residues Cys377, Cys380, Cys383, Cys387, Cys416, Cys419, Cys422, and Cys426 each coordinate [4Fe-4S] cluster. The interval 663–684 (KARKLEQQQTNAEPEEQVDPRK) is disordered.

Belongs to the 4Fe4S bacterial-type ferredoxin family. RnfC subfamily. As to quaternary structure, the complex is composed of six subunits: RsxA, RsxB, RsxC, RsxD, RsxE and RsxG. [4Fe-4S] cluster serves as cofactor.

The protein resides in the cell inner membrane. Part of a membrane-bound complex that couples electron transfer with translocation of ions across the membrane. Required to maintain the reduced state of SoxR. This is Ion-translocating oxidoreductase complex subunit C from Shigella boydii serotype 18 (strain CDC 3083-94 / BS512).